The sequence spans 614 residues: 1-deoxy-D-xylulose-5-phosphate synthase (614 aa).

Thiamine diphosphate contacts are provided by residues His76 and 117 to 119; that span reads GHS. A Mg(2+)-binding site is contributed by Asp148. Residues 149–150, Asn177, Tyr285, and Glu366 contribute to the thiamine diphosphate site; that span reads GA. Asn177 serves as a coordination point for Mg(2+).

Belongs to the transketolase family. DXPS subfamily. Homodimer. Mg(2+) serves as cofactor. Requires thiamine diphosphate as cofactor.

It catalyses the reaction D-glyceraldehyde 3-phosphate + pyruvate + H(+) = 1-deoxy-D-xylulose 5-phosphate + CO2. Its pathway is metabolic intermediate biosynthesis; 1-deoxy-D-xylulose 5-phosphate biosynthesis; 1-deoxy-D-xylulose 5-phosphate from D-glyceraldehyde 3-phosphate and pyruvate: step 1/1. In terms of biological role, catalyzes the acyloin condensation reaction between C atoms 2 and 3 of pyruvate and glyceraldehyde 3-phosphate to yield 1-deoxy-D-xylulose-5-phosphate (DXP). In Pasteurella multocida (strain Pm70), this protein is 1-deoxy-D-xylulose-5-phosphate synthase.